The sequence spans 197 residues: Recombination protein RecR (197 aa).

A C4-type zinc finger spans residues 56–71; that stretch reads CQRCHSFSDEAVCPLC. Positions 79–174 constitute a Toprim domain; sequence TLLCVVETAA…KVTRLAQGVP (96 aa).

This sequence belongs to the RecR family.

May play a role in DNA repair. It seems to be involved in an RecBC-independent recombinational process of DNA repair. It may act with RecF and RecO. In Psychrobacter cryohalolentis (strain ATCC BAA-1226 / DSM 17306 / VKM B-2378 / K5), this protein is Recombination protein RecR.